A 596-amino-acid polypeptide reads, in one-letter code: Proton channel OTOP3 (596 aa).

The span at 1–21 (MGRGARAAAAQSRWGRASRAS) shows a compositional bias: low complexity. Residues 1–59 (MGRGARAAAAQSRWGRASRASVSPGRTIRSAPAVGEAQETEAAPEKENRVDVGAEERAA) are disordered. At 1–88 (MGRGARAAAA…RDRQAQKAGQ (88 aa)) the chain is on the cytoplasmic side. S21 and S23 each carry phosphoserine. The span at 43 to 59 (APEKENRVDVGAEERAA) shows a compositional bias: basic and acidic residues. A helical membrane pass occupies residues 89–109 (LFSGLLALNVVFLGGAFICSM). The Extracellular segment spans residues 110–119 (IFNKVAVTLG). A helical transmembrane segment spans residues 120-143 (DVWILLATLKVLSLLWLLYYVAST). The Cytoplasmic segment spans residues 144–159 (TRRPHAVLYQDPHAGP). The chain crosses the membrane as a helical span at residues 160–181 (LWVRGSLVLFGSCTFCLNIFRV). At 182 to 193 (GYDVSHIRCKSQ) the chain is on the extracellular side. The helical transmembrane segment at 194-217 (LDLVFSVIEMVFIGVQTWVLWKHC) threads the bilayer. Residues 218–225 (KDCVRVQT) lie on the Cytoplasmic side of the membrane. The chain crosses the membrane as a helical span at residues 226 to 248 (NFTRCGLMLTLATNLLLWVLAVT). Residues 249 to 295 (NDSMHREIEAELGILMEKSTGNETNTCLCLNATACEAFRRGFLMLYP) are Extracellular-facing. The helical transmembrane segment at 296 to 312 (FSTEYCLICCAVLFVMW) threads the bilayer. Residues 313–338 (KNVGRHVAPHMGAHPATAPFHLHGAI) lie on the Cytoplasmic side of the membrane. A helical membrane pass occupies residues 339–358 (FGPLLGLLVLLAGVCVFVLF). The Extracellular portion of the chain corresponds to 359–372 (QIEASGPAIACQYF). A helical membrane pass occupies residues 373-395 (TLYYAFYVAVLPTMSLACLAGTA). The Cytoplasmic segment spans residues 396 to 413 (IHGLEERELDTVKNPTRS). The chain crosses the membrane as a helical span at residues 414–435 (LDVVLLMGAALGQMGIAYFSIV). Residues 436–446 (AIVAKRPHELL) lie on the Extracellular side of the membrane. Residues 447–469 (NRLILAYSLLLILQHIAQNLFII) traverse the membrane as a helical segment. Residues 470–529 (EGLHRRPLWETVPEGLAGKQEAEPPRRGSLLELGQGLQRASLAYIHSYSHLNWKRRALKE) are Cytoplasmic-facing. Residues 530–547 (ISLFLILCNITLWMMPAF) form a helical membrane-spanning segment. At 548-566 (GIHPEFENGLEKDFYGYQI) the chain is on the extracellular side. A helical membrane pass occupies residues 567–589 (WFAIVNFGLPLGVFYRMHSVGGL). Topologically, residues 590 to 596 (VEVYLGA) are cytoplasmic.

This sequence belongs to the otopetrin family. As to quaternary structure, homodimer.

The protein resides in the cell membrane. The enzyme catalyses H(+)(in) = H(+)(out). Activated by extracellular acidification. Activated by Zn(2+) under non-acidic conditions. Functionally, proton-selective channel gated by extracellular protons. The protein is Proton channel OTOP3 of Homo sapiens (Human).